Here is a 142-residue protein sequence, read N- to C-terminus: NTF2-related export protein 2 (142 aa).

The 120-residue stretch at 17–136 folds into the NTF2 domain; that stretch reads AAEEFVNIYY…WKIASDCFRF (120 aa).

In terms of assembly, associates with NXF1, NXF2, NXF3 and NXF5.

It is found in the nucleus. Its subcellular location is the cytoplasm. Its function is as follows. Regulator of protein export for NES-containing proteins. Also plays a role in mRNA nuclear export. In Bos taurus (Bovine), this protein is NTF2-related export protein 2 (NXT2).